The primary structure comprises 431 residues: Adenylosuccinate synthetase (431 aa).

GTP is bound by residues 12 to 18 (GDEGKGK) and 40 to 42 (GHT). Asp13 serves as the catalytic Proton acceptor. The Mg(2+) site is built by Asp13 and Gly40. IMP-binding positions include 13–16 (DEGK), 38–41 (NAGH), Thr131, Arg145, Gln225, Thr240, and Arg304. The Proton donor role is filled by His41. 300–306 (TTTGRKR) lines the substrate pocket. GTP contacts are provided by residues Arg306, 332–334 (KLD), and 414–416 (STS).

Belongs to the adenylosuccinate synthetase family. In terms of assembly, homodimer. It depends on Mg(2+) as a cofactor.

It localises to the cytoplasm. The catalysed reaction is IMP + L-aspartate + GTP = N(6)-(1,2-dicarboxyethyl)-AMP + GDP + phosphate + 2 H(+). It participates in purine metabolism; AMP biosynthesis via de novo pathway; AMP from IMP: step 1/2. Functionally, plays an important role in the de novo pathway of purine nucleotide biosynthesis. Catalyzes the first committed step in the biosynthesis of AMP from IMP. This chain is Adenylosuccinate synthetase, found in Jannaschia sp. (strain CCS1).